We begin with the raw amino-acid sequence, 100 residues long: Urease subunit gamma (100 aa).

The protein belongs to the urease gamma subunit family. As to quaternary structure, heterotrimer of UreA (gamma), UreB (beta) and UreC (alpha) subunits. Three heterotrimers associate to form the active enzyme.

Its subcellular location is the cytoplasm. It carries out the reaction urea + 2 H2O + H(+) = hydrogencarbonate + 2 NH4(+). Its pathway is nitrogen metabolism; urea degradation; CO(2) and NH(3) from urea (urease route): step 1/1. The sequence is that of Urease subunit gamma from Thermosynechococcus vestitus (strain NIES-2133 / IAM M-273 / BP-1).